Reading from the N-terminus, the 719-residue chain is Homeobox protein SIX5 (719 aa).

Low complexity-rich tracts occupy residues 1–22 (MATS…AAAT) and 31–65 (QLLQ…GPGS). Disordered stretches follow at residues 1–73 (MATS…VTEV) and 241–287 (WFKN…VASM). The segment at residues 194-253 (GEETVYCFKERSRAALKACYRGNRYPTPDEKRRLATLTGLSLTQVSNWFKNRRQRDRTGT) is a DNA-binding region (homeobox). Residues 272 to 282 (ESSRSPEDLER) show a composition bias toward basic and acidic residues.

Belongs to the SIX/Sine oculis homeobox family. Probably binds DNA dimer. Interacts with EYA3, and probably EYA1 and EYA2.

It localises to the nucleus. In terms of biological role, transcription factor that is thought to be involved in regulation of organogenesis. May be involved in determination and maintenance of retina formation. Binds a 5'-GGTGTCAG-3' motif present in the ARE regulatory element of ATP1A1. Binds a 5'-TCA[AG][AG]TTNC-3' motif present in the MEF3 element in the myogenin promoter, and in the IGFBP5 promoter. Thought to be regulated by association with Dach and Eya proteins, and seems to be coactivated by EYA1, EYA2 and EYA3. The sequence is that of Homeobox protein SIX5 (Six5) from Mus musculus (Mouse).